The following is a 193-amino-acid chain: Adenylate kinase (193 aa).

G10–T18 is an ATP binding site.

It belongs to the archaeal adenylate kinase family. As to quaternary structure, monomer.

It is found in the cytoplasm. It carries out the reaction AMP + ATP = 2 ADP. The polypeptide is Adenylate kinase (Methanococcus aeolicus (strain ATCC BAA-1280 / DSM 17508 / OCM 812 / Nankai-3)).